We begin with the raw amino-acid sequence, 157 residues long: MAKVESFTLDHTAVKAPYVRLITRETGTKGDVISNFDLRLVQPNENAIPTAGLHTIEHLLAGYLRDEMSGVIDCSPFGCRTGFHLITWDEQSTEEVAKALKASLHRIAYDTEWKDVQGTDKYSCGNYRDHSLFSAKEWCKAILDEGISKDPFTREVI.

Fe cation is bound by residues His-54, His-58, and Cys-124.

This sequence belongs to the LuxS family. As to quaternary structure, homodimer. Requires Fe cation as cofactor.

The enzyme catalyses S-(5-deoxy-D-ribos-5-yl)-L-homocysteine = (S)-4,5-dihydroxypentane-2,3-dione + L-homocysteine. In terms of biological role, involved in the synthesis of autoinducer 2 (AI-2) which is secreted by bacteria and is used to communicate both the cell density and the metabolic potential of the environment. The regulation of gene expression in response to changes in cell density is called quorum sensing. Catalyzes the transformation of S-ribosylhomocysteine (RHC) to homocysteine (HC) and 4,5-dihydroxy-2,3-pentadione (DPD). The chain is S-ribosylhomocysteine lyase from Levilactobacillus brevis (strain ATCC 367 / BCRC 12310 / CIP 105137 / JCM 1170 / LMG 11437 / NCIMB 947 / NCTC 947) (Lactobacillus brevis).